The primary structure comprises 280 residues: Probable ketoamine kinase lp_1983 (280 aa).

ATP is bound at residue 87-89 (DWL). Catalysis depends on Asp-189, which acts as the Proton acceptor.

The protein belongs to the fructosamine kinase family.

The catalysed reaction is N(6)-(D-ribulosyl)-L-lysine + ATP = N(6)-(3-O-phospho-D-ribulosyl)-L-lysine + ADP + H(+). The enzyme catalyses N-(D-ribulosyl)-cadaverine + ATP = N-(3-O-phospho-D-ribulosyl)-cadaverine + ADP + H(+). It carries out the reaction N(6)-(D-erythrulosyl)-L-lysine + ATP = N(6)-(3-O-phospho-D-erythrulosyl)-L-lysine + ADP + H(+). It catalyses the reaction N-(D-erythrulosyl)-cadaverine + ATP = N-(3-O-phospho-D-erythrulosyl)-cadaverine + ADP + H(+). The catalysed reaction is N(6)-D-ribulosyl-L-lysyl-[protein] + ATP = N(6)-(3-O-phospho-D-ribulosyl)-L-lysyl-[protein] + ADP + H(+). The enzyme catalyses N(6)-(D-erythrulosyl)-L-lysyl-[protein] + ATP = N(6)-(3-O-phospho-D-erythrulosyl)-L-lysyl-[protein] + ADP + H(+). Ketoamine kinase that phosphorylates ketoamines, such as erythruloselysine, erythrulosecadaverine, ribuloselysine and ribulosecadaverine, on the third carbon of the sugar moiety to generate ketoamine 3-phosphate. Has higher activity on free lysine (erythruloselysine and ribuloselysine), than on ribuloselysine and erythruloselysine residues on glycated proteins. The sequence is that of Probable ketoamine kinase lp_1983 from Lactiplantibacillus plantarum (strain ATCC BAA-793 / NCIMB 8826 / WCFS1) (Lactobacillus plantarum).